A 1412-amino-acid polypeptide reads, in one-letter code: DNA-directed RNA polymerase subunit beta' (1412 aa).

Residues Cys71, Cys73, Cys86, and Cys89 each contribute to the Zn(2+) site. Residues Asp461, Asp463, and Asp465 each coordinate Mg(2+). Positions 815, 889, 896, and 899 each coordinate Zn(2+).

Belongs to the RNA polymerase beta' chain family. In terms of assembly, the RNAP catalytic core consists of 2 alpha, 1 beta, 1 beta' and 1 omega subunit. When a sigma factor is associated with the core the holoenzyme is formed, which can initiate transcription. It depends on Mg(2+) as a cofactor. Zn(2+) is required as a cofactor.

The catalysed reaction is RNA(n) + a ribonucleoside 5'-triphosphate = RNA(n+1) + diphosphate. In terms of biological role, DNA-dependent RNA polymerase catalyzes the transcription of DNA into RNA using the four ribonucleoside triphosphates as substrates. In Actinobacillus pleuropneumoniae serotype 5b (strain L20), this protein is DNA-directed RNA polymerase subunit beta'.